Reading from the N-terminus, the 407-residue chain is MPAPDIPEVARTETEPLTRLPFEPITKSHILNCSYDKWHAEYRSSTLKSRIIPLTPEFLSYLREDGIVLPSEIATFPPPETYNNNSTSDGWDEDTDTESDPSEKFSEIHKQIQETITELGGSVVPKLNWSAPKDATWISLKQNSMECNTANDVYLLLKSSDFITHDLEHAFDGCAEDPSLTKENIQYVLVLRKWFKVNPSCEFRCFVRDRRIIGICQRDLNYFDFLFPLIPTLREAIQEYFDRTLKDSFPDRNFSFDVYIPEPFDKVRLVDINPWAPRTDPLLFSWLELLTLSVPPPLLGVADSSSVPPLPVQSSDEDDGADDVEELGWMPEFRLIKKDDPEAYSFSSPQYSAHKMPQEVVEAGASGEGGMREFADNWQRMLSGELEMMRAGEDSSDDEDEVEAIVT.

Residues 73–101 (IATFPPPETYNNNSTSDGWDEDTDTESDP) form a disordered region. The span at 90–100 (GWDEDTDTESD) shows a compositional bias: acidic residues. Residues lysine 126, tryptophan 129, alanine 131, lysine 133, arginine 192, lysine 193, tryptophan 194, phenylalanine 195, glutamate 202, arginine 204, arginine 218, aspartate 257, aspartate 271, and asparagine 273 each contribute to the ATP site. Aspartate 271 and asparagine 273 together coordinate Mg(2+).

Belongs to the CDC123 family.

Its subcellular location is the cytoplasm. In terms of biological role, ATP-dependent protein-folding chaperone for the eIF2 complex. Binds to the gamma subunit of the eIF2 complex which allows the subunit to assemble with the alpha and beta subunits. This Sclerotinia sclerotiorum (strain ATCC 18683 / 1980 / Ss-1) (White mold) protein is Translation initiation factor eIF2 assembly protein (CDC123).